Reading from the N-terminus, the 319-residue chain is tRNA-cytidine(32) 2-sulfurtransferase (319 aa).

The PP-loop motif signature appears at Ser-45 to Ser-50. Residues Cys-120, Cys-123, and Cys-211 each contribute to the [4Fe-4S] cluster site.

The protein belongs to the TtcA family. Homodimer. Mg(2+) serves as cofactor. It depends on [4Fe-4S] cluster as a cofactor.

It localises to the cytoplasm. It catalyses the reaction cytidine(32) in tRNA + S-sulfanyl-L-cysteinyl-[cysteine desulfurase] + AH2 + ATP = 2-thiocytidine(32) in tRNA + L-cysteinyl-[cysteine desulfurase] + A + AMP + diphosphate + H(+). Its pathway is tRNA modification. In terms of biological role, catalyzes the ATP-dependent 2-thiolation of cytidine in position 32 of tRNA, to form 2-thiocytidine (s(2)C32). The sulfur atoms are provided by the cysteine/cysteine desulfurase (IscS) system. This is tRNA-cytidine(32) 2-sulfurtransferase from Shewanella woodyi (strain ATCC 51908 / MS32).